Reading from the N-terminus, the 843-residue chain is Glycogen phosphorylase, muscle form (843 aa).

An N-acetylserine modification is found at S2. At S15 the chain carries Phosphoserine; by PHK; in form phosphorylase A. Residues D43 and Y76 each contribute to the AMP site. 2 positions are modified to phosphotyrosine: Y204 and Y227. AMP is bound at residue 310–319; the sequence is RRFKSSKFGC. A Phosphoserine modification is found at S430. Y473 bears the Phosphotyrosine mark. S514 carries the post-translational modification Phosphoserine. The residue at position 681 (K681) is an N6-(pyridoxal phosphate)lysine. A phosphoserine mark is found at S747 and S748.

The protein belongs to the glycogen phosphorylase family. In terms of assembly, homodimer. Homotetramer; to form the enzymatically active phosphorylase A. Pyridoxal 5'-phosphate is required as a cofactor. Post-translationally, phosphorylation of Ser-15 converts phosphorylase B (unphosphorylated) to phosphorylase A.

The enzyme catalyses [(1-&gt;4)-alpha-D-glucosyl](n) + phosphate = [(1-&gt;4)-alpha-D-glucosyl](n-1) + alpha-D-glucose 1-phosphate. Its activity is regulated as follows. Allosterically regulated through the non-covalent binding of metabolites, being activated by AMP and inhibited by ATP, ADP, and glucose-6-phosphate. The activity is also controlled by post-translational modifications including phosphorylation. Functionally, allosteric enzyme that catalyzes the rate-limiting step in glycogen catabolism, the phosphorolytic cleavage of glycogen to produce glucose-1-phosphate, and plays a central role in maintaining cellular and organismal glucose homeostasis. The chain is Glycogen phosphorylase, muscle form from Oryctolagus cuniculus (Rabbit).